Consider the following 273-residue polypeptide: 2,3,4,5-tetrahydropyridine-2,6-dicarboxylate N-succinyltransferase (273 aa).

Residues Arg104 and Asp141 each contribute to the substrate site.

This sequence belongs to the transferase hexapeptide repeat family. As to quaternary structure, homotrimer.

The protein localises to the cytoplasm. The catalysed reaction is (S)-2,3,4,5-tetrahydrodipicolinate + succinyl-CoA + H2O = (S)-2-succinylamino-6-oxoheptanedioate + CoA. Its pathway is amino-acid biosynthesis; L-lysine biosynthesis via DAP pathway; LL-2,6-diaminopimelate from (S)-tetrahydrodipicolinate (succinylase route): step 1/3. In Psychrobacter cryohalolentis (strain ATCC BAA-1226 / DSM 17306 / VKM B-2378 / K5), this protein is 2,3,4,5-tetrahydropyridine-2,6-dicarboxylate N-succinyltransferase.